A 275-amino-acid chain; its full sequence is Probable ABC transporter permease protein PH1216 (275 aa).

The next 6 membrane-spanning stretches (helical) occupy residues 10–30, 73–93, 105–125, 137–157, 181–203, and 241–261; these read LLYI…WSAI, IFTT…GFTI, LLAL…IPLV, ILGL…LLFT, IYTK…YQFT, and IQMA…IALG. Residues 68 to 260 enclose the ABC transmembrane type-1 domain; it reads ILNSLIFTTF…LPTLLIMIAL (193 aa).

It belongs to the binding-protein-dependent transport system permease family. MalFG subfamily.

The protein resides in the cell membrane. Its function is as follows. Probably part of a binding-protein-dependent transport system PH1214/15/16. Probably responsible for the translocation of the substrate across the membrane. This chain is Probable ABC transporter permease protein PH1216, found in Pyrococcus horikoshii (strain ATCC 700860 / DSM 12428 / JCM 9974 / NBRC 100139 / OT-3).